We begin with the raw amino-acid sequence, 360 residues long: MESSNCKVITPLLSQRHRRMVTKDGHSTLQTDGAPRGLVYLRDAWGTLIDMRWRWVMLVFSASFVLHWLVFAVLWYVLAEMNGDLELDHDAPPENHTICVKYITSFTAAFSFSLETQLTIGYGTMFPSGDCPSAIALLAIQMLLGLMLEAFITGAFVAKIARPKNRAFSIRFTDLAVVAHRDGKPNLIFQVANIRHSPLTSVRVSAVLYQERENGQLHQTSVDFHLDGISSEECPFFIFPLTYYHSITPSSPLVTLLQHENPPHFELVVFLSAMQEGTGEICQRRTSYLPSEIMLHHCFASLLTRGSKGEYKVKMENFDKTVPELPTPLVSKSPHRTDLDIRINGQSIDNFQISETGLTE.

The Cytoplasmic portion of the chain corresponds to 1–50 (MESSNCKVITPLLSQRHRRMVTKDGHSTLQTDGAPRGLVYLRDAWGTLID). Residues 51 to 77 (MRWRWVMLVFSASFVLHWLVFAVLWYV) form a helical membrane-spanning segment. Residues 78–105 (LAEMNGDLELDHDAPPENHTICVKYITS) are Extracellular-facing. The segment at residues 106–122 (FTAAFSFSLETQLTIGY) is an intramembrane region (helical; Pore-forming). A Selectivity filter motif is present at residues 119-124 (TIGYGT). The Extracellular segment spans residues 123–131 (GTMFPSGDC). A helical membrane pass occupies residues 132–157 (PSAIALLAIQMLLGLMLEAFITGAFV). Over 158–360 (AKIARPKNRA…FQISETGLTE (203 aa)) the chain is Cytoplasmic. Ser201 is subject to Phosphoserine; by PKC. At Ser287 the chain carries Phosphoserine; by PKA.

This sequence belongs to the inward rectifier-type potassium channel (TC 1.A.2.1) family. KCNJ13 subfamily. Homotetramer. In terms of processing, phosphorylation at Ser-201 by PKC strongly inhibits ionic currents, while phosphorylation at Ser-287 by PKA increases them.

Its subcellular location is the membrane. It localises to the cell membrane. The enzyme catalyses K(+)(in) = K(+)(out). Its activity is regulated as follows. Inhibited by Ba(2+) and Cs(+), although sensitivity to those inhibitors is much lower than in other Kir channels. In terms of biological role, inward rectifier potassium channels are characterized by a greater tendency to allow potassium to flow into the cell rather than out of it. Their voltage dependence is regulated by the concentration of extracellular potassium; as external potassium is raised, the voltage range of the channel opening shifts to more positive voltages. The inward rectification is mainly due to the blockage of outward current by internal magnesium. KCNJ13 has a very low single channel conductance, low sensitivity to block by external barium and cesium, and no dependence of its inward rectification properties on the internal blocking particle magnesium. This is Inward rectifier potassium channel 13 (KCNJ13) from Cavia porcellus (Guinea pig).